We begin with the raw amino-acid sequence, 441 residues long: Leucine-rich repeat-containing protein 17 (441 aa).

The first 18 residues, 1–18 (MRVVTIVILLCFCKAAEL), serve as a signal peptide directing secretion. LRR repeat units lie at residues 82–103 (DLLH…MFSK), 106–127 (KLKS…AFFG), and 130–151 (KLTT…VFIY). Residues 163–214 (NPWHCTCEIETLISMLQIPRNRNLGNYAKCESPQEQKNKKLRQIKSEQLCNE) form the LRRCT 1 domain. Positions 225–268 (QVSGRPPVIKPEVDSTFCHNYVFPIQTLDCKRKELKKVPNNIPP) constitute an LRRNT domain. LRR repeat units lie at residues 269 to 290 (DIVK…EFED), 293 to 314 (ELKK…AFLG), and 317 to 340 (HLEE…EDLY). Residues 350–402 (NPWRCDYNIHYLYYWLKHHYNVHFNGLECKTPEEYKGWSVGKYIRSYYEECPK) enclose the LRRCT 2 domain.

In terms of tissue distribution, expressed in osteoblast cell lines. Well expressed in ovary, heart, pancreas, skeletal muscle, lung, and fetal kidney and lung and only at the basal levels in the other tissues examined including adult kidney. More expressed in S-type neuroblastoma cells than in N-type neuroblastoma cells.

It is found in the secreted. The protein resides in the extracellular space. Its function is as follows. Involved in bone homeostasis. Acts as a negative regulator of RANKL-induced osteoclast precursor differentiation from bone marrow precursors. The polypeptide is Leucine-rich repeat-containing protein 17 (LRRC17) (Homo sapiens (Human)).